Here is a 374-residue protein sequence, read N- to C-terminus: 4-galactosyl-N-acetylglucosaminide 3-alpha-L-fucosyltransferase FUT5 (374 aa).

At 1–15 (MDPLGPAKPQWLWRR) the chain is on the cytoplasmic side. A helical; Signal-anchor for type II membrane protein transmembrane segment spans residues 16-34 (CLAGLLFQLLVAVCFFSYL). Residues 35-374 (RVSRDDATGS…TVRSIAAWFT (340 aa)) lie on the Lumenal side of the membrane. Asn-60, Asn-105, Asn-167, and Asn-198 each carry an N-linked (GlcNAc...) asparagine glycan.

The protein belongs to the glycosyltransferase 10 family. Liver, colon and testis and trace amounts in T-cells and brain.

The protein localises to the golgi apparatus. The protein resides in the golgi stack membrane. The enzyme catalyses a beta-D-galactosyl-(1-&gt;3)-N-acetyl-beta-D-glucosaminyl derivative + GDP-beta-L-fucose = a beta-D-galactosyl-(1-&gt;3)-[alpha-L-fucosyl-(1-&gt;4)]-N-acetyl-beta-D-glucosaminyl derivative + GDP + H(+). It carries out the reaction an N-acetyl-alpha-neuraminyl-(2-&gt;3)-beta-D-galactosyl-(1-&gt;4)-N-acetyl-beta-D-glucosaminyl derivative + GDP-beta-L-fucose = an alpha-Neu5Ac-(2-&gt;3)-beta-D-Gal-(1-&gt;4)-[alpha-L-Fuc-(1-&gt;3)]-beta-D-GlcNAc derivative + GDP + H(+). It catalyses the reaction an alpha-Neu5Ac-(2-&gt;3)-beta-D-Gal-(1-&gt;4)-beta-D-GlcNAc-(1-&gt;3)-beta-D-Gal-(1-&gt;4)-[alpha-L-Fuc-(1-&gt;3)]-beta-D-GlcNAc derivative + GDP-beta-L-fucose = an alpha-Neu5Ac-(2-&gt;3)-beta-D-Gal-(1-&gt;4)-[alpha-L-Fuc-(1-&gt;3)]-beta-D-GlcNAc-(1-&gt;3)-beta-D-Gal-(1-&gt;4)-[alpha-L-Fuc-(1-&gt;3)]-beta-D-GlcNAc derivative + GDP + H(+). The catalysed reaction is a beta-D-galactosyl-(1-&gt;4)-N-acetyl-beta-D-glucosaminyl derivative + GDP-beta-L-fucose = a beta-D-galactosyl-(1-&gt;4)-[alpha-L-fucosyl-(1-&gt;3)]-N-acetyl-beta-D-glucosaminyl derivative + GDP + H(+). The enzyme catalyses a neolactoside nLc4Cer + GDP-beta-L-fucose = a neolactoside III(3)-alpha-Fuc-nLc4Cer + GDP + H(+). It carries out the reaction a neolactoside nLc6Cer + GDP-beta-L-fucose = beta-D-galactosyl-(1-&gt;4)-N-acetyl-beta-D-glucosaminyl-(1-&gt;3)-beta-D-galactosyl-(1-&gt;4)-[alpha-L-fucosyl-(1-&gt;3)]-N-acetyl-beta-D-glucosaminyl-(1-&gt;3)-beta-D-galactosyl-(1-&gt;4)-beta-D-glucosyl-(1&lt;-&gt;1')-ceramide + GDP + H(+). It catalyses the reaction a neolactoside nLc6Cer(d18:1(4E)) + GDP-beta-L-fucose = a neolactoside III(3)-alpha-Fuc-nLc6Cer(d18:1(4E)) + GDP + H(+). The catalysed reaction is a neolactoside nLc4Cer(d18:1(4E)) + GDP-beta-L-fucose = a neolactoside III(3)-alpha-Fuc-nLc4Cer(d18:1(4E)) + GDP + H(+). The enzyme catalyses a neolactoside VI(3)-alpha-NeuNAc-nLc6Cer + GDP-beta-L-fucose = a neolactoside VI(3)-alpha-NeuAc,III(3)-alphaFuc-nLc6Cer + GDP + H(+). It carries out the reaction beta-D-galactosyl-(1-&gt;4)-N-acetyl-D-glucosamine + GDP-beta-L-fucose = beta-D-galactosyl-(1-&gt;4)-[alpha-L-fucosyl-(1-&gt;3)]-N-acetyl-D-glucosamine + GDP + H(+). It catalyses the reaction N-acetyl-alpha-neuraminosyl-(2-&gt;3)-beta-D-galactosyl-(1-&gt;4)-N-acetyl-beta-D-glucosamine + GDP-beta-L-fucose = N-acetyl-alpha-neuraminosyl-(2-&gt;3)-beta-D-galactosyl-(1-&gt;4)-[alpha-L-fucosyl-(1-&gt;3)]-N-acetyl-beta-D-glucosamine + GDP + H(+). The catalysed reaction is alpha-L-Fuc-(1-&gt;2)-beta-D-Gal-(1-&gt;4)-D-GlcNAc + GDP-beta-L-fucose = alpha-L-Fuc-(1-&gt;2)-beta-D-Gal-(1-&gt;4)-[alpha-L-Fuc-(1-&gt;3)]-D-GlcNAc + GDP + H(+). The enzyme catalyses an alpha-Neu5Ac-(2-&gt;3)-beta-D-Gal-(1-&gt;3)-D-GlcNAc derivative + GDP-beta-L-fucose = an alpha-Neu5Ac-(2-&gt;3)-beta-D-Gal-(1-&gt;3)-[alpha-L-Fuc-(1-&gt;4)]-beta-D-GlcNAc derivative + GDP + H(+). It functions in the pathway protein modification; protein glycosylation. Catalyzes preferentially the transfer of L-fucose, from a guanosine diphosphate-beta-L-fucose, to the N-acetyl-beta-D-glucosamine (GlcNAc) of an N-acetyllactosamine unit (type 2 chain) of an oligosaccharide, or a glycoprotein- and a glycolipid-linked N-acetyllactosamine unit via an alpha (1,3) linkage and participates in the surface expression of VIM-2, Lewis X/SSEA-1 and sialyl Lewis X antigens. Preferentially transfers fucose to the GlcNAc of an internal N-acetyllactosamine unit of a poly-N-acetyllactosamine chain acceptor substrate. Also catalyzes to a lesser extend the transfer of L-fucose to the GlcNAc of a type 1 (beta-D-galactosyl-(1-&gt;3)-N-acetyl-beta-D-glucosaminyl) or H-type 1 (alpha-L-Fuc-(1-&gt;2)-beta-D-Gal-(1-&gt;3)-D-GlcNAc) chain oligosaccharide via an alpha (1,4) linkage. Preferentially catalyzes sialylated type 2 oligosaccharide acceptors over neutral type 2 or H type 2 (alpha-L-Fuc-(1-&gt;2)-beta-D-Gal-(1-&gt;4)-D-GlcNAc) oligosaccharide acceptors. Lactose-based structures are also acceptor substrates. The sequence is that of 4-galactosyl-N-acetylglucosaminide 3-alpha-L-fucosyltransferase FUT5 from Homo sapiens (Human).